Reading from the N-terminus, the 561-residue chain is Sesquiterpene synthase 1 (561 aa).

4 residues coordinate Mg(2+): aspartate 313, aspartate 317, aspartate 458, and glutamate 466. A DDXXD motif motif is present at residues 313-317 (DDIYD).

This sequence belongs to the terpene synthase family. Tpsa subfamily. It depends on Mn(2+) as a cofactor. Mg(2+) is required as a cofactor.

Its subcellular location is the cytoplasm. The catalysed reaction is (2E,6E)-farnesyl diphosphate = (1S,8aR)-delta-cadinene + diphosphate. It functions in the pathway secondary metabolite biosynthesis; terpenoid biosynthesis. Its function is as follows. Involved in the biosynthesis of delta-cadinene. This chain is Sesquiterpene synthase 1 (STS1), found in Thapsia garganica (Deadly carrot).